The chain runs to 228 residues: Ephrin-A5 (228 aa).

A signal peptide spans 1–20 (MLHVEMLTLLFLVLWMCVFS). The Ephrin RBD domain maps to 29–162 (ADRYAVYWNS…KLKVFVRPTN (134 aa)). Asn37 carries N-linked (GlcNAc...) asparagine glycosylation. Cystine bridges form between Cys62–Cys102 and Cys90–Cys151. Residues 186-205 (EPADDTVHESAEPSRGENAA) are disordered. Basic and acidic residues predominate over residues 190 to 200 (DTVHESAEPSR). Asn203 is lipidated: GPI-anchor amidated asparagine. The propeptide at 204–228 (AAQTPRIPSRLLAILLFLLAMLLTL) is removed in mature form.

It belongs to the ephrin family. In terms of assembly, binds to the receptor tyrosine kinases EPHA2, EPHA3, EPHB1 and EPHB2. Interacts with EPHA8; activates EPHA8. Forms a ternary EFNA5-EPHA3-ADAM10 complex mediating EFNA5 extracellular domain shedding by ADAM10 which regulates the EFNA5-EPHA3 complex internalization and function. Expressed in brain, heart, placenta and lung.

The protein resides in the cell membrane. It is found in the membrane. The protein localises to the caveola. Its function is as follows. Cell surface GPI-bound ligand for Eph receptors, a family of receptor tyrosine kinases which are crucial for migration, repulsion and adhesion during neuronal, vascular and epithelial development. Binds promiscuously Eph receptors residing on adjacent cells, leading to contact-dependent bidirectional signaling into neighboring cells. The signaling pathway downstream of the receptor is referred to as forward signaling while the signaling pathway downstream of the ephrin ligand is referred to as reverse signaling. Induces compartmentalized signaling within a caveolae-like membrane microdomain when bound to the extracellular domain of its cognate receptor. This signaling event requires the activity of the Fyn tyrosine kinase. Activates the EPHA3 receptor to regulate cell-cell adhesion and cytoskeletal organization. With the receptor EPHA2 may regulate lens fiber cells shape and interactions and be important for lens transparency maintenance. May function actively to stimulate axon fasciculation. The interaction of EFNA5 with EPHA5 also mediates communication between pancreatic islet cells to regulate glucose-stimulated insulin secretion. Cognate/functional ligand for EPHA7, their interaction regulates brain development modulating cell-cell adhesion and repulsion. The polypeptide is Ephrin-A5 (Efna5) (Rattus norvegicus (Rat)).